The chain runs to 264 residues: RNA-binding protein pos-1 (264 aa).

The interval 56–82 is disordered; it reads QDKETQNSASQPTSEQSLANRDPCTVP. Positions 61 to 74 are enriched in polar residues; that stretch reads QNSASQPTSEQSLA. 2 consecutive C3H1-type zinc fingers follow at residues 98–126 and 141–169; these read AFKTALCDAYKRSQACSYGDQCRFAHGVH and KYKTVLCDKFSMTGNCKYGTRCQFIHKIV. 8 residues coordinate Zn(2+): C104, C113, C119, H123, C147, C156, C162, and H166.

As to quaternary structure, monomer.

The protein resides in the cytoplasm. RNA-binding protein that coordinates cell fate specification and differentiation during early embryogenesis. Binds to a consensus pos-1 recognition element (PRE) consisting of the sequence 5'-UA(U 2-3)RGD(N 1-3)G-3', where R is any purine, D is A, G, or U, and N is any base. The PRE motif is found within the 3' untranslated region of many maternal transcripts required for early development. Binds to the 3' untranslated region (UTR) of Notch receptor homolog glp-1, thereby repressing glp-1 translation in the posterior blastomeres in the embryo. Binding to glp-1 3' UTR excludes cell fate regulator gld-1 binding to an overlapping binding site in the glp-1 3' UTR. Binds to the neg-1 3'UTR thereby opposing neg-1 expression and cytoplasmic polyadenylation of the neg-1 mRNA poly(A) tail promoted by gld-2 and gld-3. By inhibiting the cytoplasmic lengthening of neg-1 mRNA, restricts the accumulation of neg-1 protein and promotes endo-mesoderm development in anterior blastomeres. Essential for germline specification. The protein is RNA-binding protein pos-1 of Caenorhabditis elegans.